The chain runs to 144 residues: Large ribosomal subunit protein uL15 (144 aa).

Positions 1–14 (MVVRREKKSRKMRG) are enriched in basic residues. Residues 1 to 35 (MVVRREKKSRKMRGSRTMGWGIRGQHRDRGSQGGR) form a disordered region.

The protein belongs to the universal ribosomal protein uL15 family. In terms of assembly, part of the 50S ribosomal subunit.

Functionally, binds to the 23S rRNA. The polypeptide is Large ribosomal subunit protein uL15 (Saccharolobus solfataricus (strain ATCC 35092 / DSM 1617 / JCM 11322 / P2) (Sulfolobus solfataricus)).